The following is a 245-amino-acid chain: Probable phosphatase CKO_02035 (245 aa).

Positions 7, 9, 15, 40, 73, 101, 131, 192, and 194 each coordinate Zn(2+).

This sequence belongs to the PHP family. Homotrimer. The cofactor is Zn(2+).

The polypeptide is Probable phosphatase CKO_02035 (Citrobacter koseri (strain ATCC BAA-895 / CDC 4225-83 / SGSC4696)).